The sequence spans 192 residues: Peptide deformylase (192 aa).

C108 and H150 together coordinate Fe cation. E151 is an active-site residue. H154 lines the Fe cation pocket.

Belongs to the polypeptide deformylase family. Fe(2+) serves as cofactor.

The enzyme catalyses N-terminal N-formyl-L-methionyl-[peptide] + H2O = N-terminal L-methionyl-[peptide] + formate. In terms of biological role, removes the formyl group from the N-terminal Met of newly synthesized proteins. Requires at least a dipeptide for an efficient rate of reaction. N-terminal L-methionine is a prerequisite for activity but the enzyme has broad specificity at other positions. This is Peptide deformylase from Opitutus terrae (strain DSM 11246 / JCM 15787 / PB90-1).